The chain runs to 171 residues: GTP-dependent dephospho-CoA kinase (171 aa).

Residues aspartate 49, valine 51, aspartate 68, and glutamate 122 each coordinate GTP.

It belongs to the GTP-dependent DPCK family.

The enzyme catalyses 3'-dephospho-CoA + GTP = GDP + CoA + H(+). The protein operates within cofactor biosynthesis; coenzyme A biosynthesis. Its function is as follows. Catalyzes the GTP-dependent phosphorylation of the 3'-hydroxyl group of dephosphocoenzyme A to form coenzyme A (CoA). This Hyperthermus butylicus (strain DSM 5456 / JCM 9403 / PLM1-5) protein is GTP-dependent dephospho-CoA kinase.